We begin with the raw amino-acid sequence, 400 residues long: Phosphoglycerate kinase (400 aa).

Substrate is bound by residues 23-25, arginine 38, 61-64, arginine 120, and arginine 153; these read DLN and HFGR. ATP contacts are provided by residues lysine 203, glutamate 325, and 355–358; that span reads GGDT.

The protein belongs to the phosphoglycerate kinase family. In terms of assembly, monomer.

It is found in the cytoplasm. The enzyme catalyses (2R)-3-phosphoglycerate + ATP = (2R)-3-phospho-glyceroyl phosphate + ADP. It participates in carbohydrate degradation; glycolysis; pyruvate from D-glyceraldehyde 3-phosphate: step 2/5. The sequence is that of Phosphoglycerate kinase from Rhizobium leguminosarum bv. trifolii (strain WSM2304).